The primary structure comprises 242 residues: Venom nerve growth factor 2 (242 aa).

The N-terminal stretch at 1-18 is a signal peptide; that stretch reads MSMLCYTLIIAFLIGIWA. Positions 19 to 125 are excised as a propeptide; that stretch reads APKSEDNVPL…ALNRNIRSKR (107 aa). Positions 46–69 are disordered; that stretch reads KALKTSRNTDQRHPAPKKAEDQEL. Positions 52–66 are enriched in basic and acidic residues; the sequence is RNTDQRHPAPKKAED. 3 cysteine pairs are disulfide-bonded: cysteine 139–cysteine 203, cysteine 181–cysteine 231, and cysteine 191–cysteine 233. Asparagine 147 carries N-linked (GlcNAc...) asparagine glycosylation.

The protein belongs to the NGF-beta family. As to quaternary structure, homodimer; non-covalently linked. In terms of tissue distribution, expressed by the venom gland.

It is found in the secreted. Functionally, nerve growth factor is important for the development and maintenance of the sympathetic and sensory nervous systems. It stimulates division and differentiation of sympathetic and embryonic sensory neurons as well as basal forebrain cholinergic neurons in the brain. Its relevance in the snake venom is not clear. However, it has been shown to inhibit metalloproteinase-dependent proteolysis of platelet glycoprotein Ib alpha, suggesting a metalloproteinase inhibition to prevent metalloprotease autodigestion and/or protection against prey proteases. Binds a lipid between the two protein chains in the homodimer. The lipid-bound form promotes histamine relase from mouse mast cells, contrary to the lipid-free form. The protein is Venom nerve growth factor 2 of Demansia vestigiata (Lesser black whip snake).